The sequence spans 342 residues: Renalase (342 aa).

A signal peptide spans 1 to 17; that stretch reads MSRVLVVGAGLTGSLCA. Residues threonine 12, arginine 42, and 61 to 62 contribute to the FAD site; that span reads QY.

The protein belongs to the renalase family. Requires FAD as cofactor. As to expression, expressed predominantly in kidney and testis with lower levels in liver, heart and embryo and weak expression in brain and skeletal muscle.

Its subcellular location is the secreted. It catalyses the reaction 1,2-dihydro-beta-NAD + O2 + H(+) = H2O2 + NAD(+). The enzyme catalyses 1,2-dihydro-beta-NADP + O2 + H(+) = H2O2 + NADP(+). The catalysed reaction is 1,6-dihydro-beta-NADP + O2 + H(+) = H2O2 + NADP(+). It carries out the reaction 1,6-dihydro-beta-NAD + O2 + H(+) = H2O2 + NAD(+). Functionally, catalyzes the oxidation of the less abundant 1,2-dihydro-beta-NAD(P) and 1,6-dihydro-beta-NAD(P) to form beta-NAD(P)(+). The enzyme hormone is secreted by the kidney, and circulates in blood and modulates cardiac function and systemic blood pressure. Lowers blood pressure in vivo by decreasing cardiac contractility and heart rate and preventing a compensatory increase in peripheral vascular tone, suggesting a causal link to the increased plasma catecholamine and heightened cardiovascular risk. High concentrations of catecholamines activate plasma renalase and promotes its secretion and synthesis. The sequence is that of Renalase from Mus musculus (Mouse).